A 317-amino-acid chain; its full sequence is Melanocyte-stimulating hormone receptor (317 aa).

The Extracellular segment spans residues M1 to E37. The N-linked (GlcNAc...) asparagine glycan is linked to N29. Residues V38 to I63 traverse the membrane as a helical segment. At A64–S72 the chain is on the cytoplasmic side. The helical transmembrane segment at M73–L93 threads the bilayer. The Extracellular portion of the chain corresponds to E94 to N118. Residues T119–V140 traverse the membrane as a helical segment. At D141 to R163 the chain is on the cytoplasmic side. Residues A164–Y183 traverse the membrane as a helical segment. Residues D184–C191 lie on the Extracellular side of the membrane. Residues L192 to L211 form a helical membrane-spanning segment. Residues A212–A240 are Cytoplasmic-facing. The chain crosses the membrane as a helical span at residues A241 to F266. At C267–N279 the chain is on the extracellular side. A helical transmembrane segment spans residues F280–F300. The Cytoplasmic segment spans residues R301–W317. C315 carries S-palmitoyl cysteine lipidation.

It belongs to the G-protein coupled receptor 1 family. As to quaternary structure, interacts with MGRN1, but does not undergo MGRN1-mediated ubiquitination; this interaction competes with GNAS-binding and thus inhibits agonist-induced cAMP production. Interacts with OPN3; the interaction results in a decrease in MC1R-mediated cAMP signaling and ultimately a decrease in melanin production in melanocytes.

The protein localises to the cell membrane. Functionally, receptor for MSH (alpha, beta and gamma) and ACTH. The activity of this receptor is mediated by G proteins which activate adenylate cyclase. Mediates melanogenesis, the production of eumelanin (black/brown) and phaeomelanin (red/yellow), via regulation of cAMP signaling in melanocytes. This chain is Melanocyte-stimulating hormone receptor (MC1R), found in Saguinus midas (Golden-handed tamarin).